The primary structure comprises 187 residues: uncharacterized protein (187 aa).

Positions 53-187 (RKPHIYSPAD…CLQTSYVVPG (135 aa)) constitute a Tyr recombinase domain. Catalysis depends on residues Arg-98 and Lys-123.

The protein belongs to the 'phage' integrase family.

This is an uncharacterized protein from Sinorhizobium fredii (strain NBRC 101917 / NGR234).